The primary structure comprises 219 residues: Chloramphenicol acetyltransferase (219 aa).

The active-site Proton acceptor is H193.

The protein belongs to the chloramphenicol acetyltransferase family.

The enzyme catalyses chloramphenicol + acetyl-CoA = chloramphenicol 3-acetate + CoA. In terms of biological role, this enzyme is an effector of chloramphenicol resistance in bacteria. This is Chloramphenicol acetyltransferase (cat) from Acinetobacter calcoaceticus subsp. anitratus.